The chain runs to 295 residues: Large ribosomal subunit protein uL29m (295 aa).

It belongs to the universal ribosomal protein uL29 family. Component of the mitochondrial large ribosomal subunit. Mature mitochondrial ribosomes consist of a small (37S) and a large (54S) subunit. The 37S subunit contains at least 33 different proteins and 1 molecule of RNA (15S). The 54S subunit contains at least 45 different proteins and 1 molecule of RNA (21S).

It localises to the mitochondrion. The sequence is that of Large ribosomal subunit protein uL29m (MRPL4) from Meyerozyma guilliermondii (strain ATCC 6260 / CBS 566 / DSM 6381 / JCM 1539 / NBRC 10279 / NRRL Y-324) (Yeast).